The following is a 573-amino-acid chain: Splicing factor U2af large subunit B (573 aa).

A compositionally biased stretch (acidic residues) spans 1–12 (MPDYEGNGEDID). Residues 1–187 (MPDYEGNGED…DMAPPTSAML (187 aa)) are disordered. The segment covering 38-145 (SDSKSQHSSR…QREHAKDRES (108 aa)) has biased composition (basic and acidic residues). Over residues 161-173 (SRSRSRSRSKSKR) the composition is skewed to basic residues. 3 RRM domains span residues 239–322 (RRVY…RPSD), 359–437 (DRIF…RANQ), and 478–564 (EVIS…YPEN).

It belongs to the splicing factor SR family. In terms of tissue distribution, expressed in stems, leaves and apical buds.

The protein resides in the nucleus. Necessary for the splicing of pre-mRNA. Binds to the U -enriched regions of plant introns. The chain is Splicing factor U2af large subunit B (U2AF65B) from Nicotiana plumbaginifolia (Leadwort-leaved tobacco).